A 1507-amino-acid chain; its full sequence is Paired amphipathic helix protein sin-3 (1507 aa).

Disordered stretches follow at residues 1–26, 228–286, 397–450, 543–569, and 1349–1434; these read MYNPPPGGGGGNNGGDQSQQQPTNNA, PLAL…PPRV, ELGS…MMEE, VDDVPGPSNAPQEIKKPDDIEKKDSSK, and IPRE…MDHL. A compositionally biased stretch (polar residues) spans 16-26; it reads DQSQQQPTNNA. Residues 270–279 show a composition bias toward basic residues; it reads RQNRPGRRKK. In terms of domain architecture, PAH spans 282 to 352; the sequence is GPPRVDEALA…LGFNTFLPTG (71 aa). A compositionally biased stretch (acidic residues) spans 427-438; it reads DGIDDEDDEESG. Basic and acidic residues-rich tracts occupy residues 439-450 and 555-568; these read IEDKNNEEMMEE and EIKKPDDIEKKDSS. 3 stretches are compositionally biased toward acidic residues: residues 1354 to 1365, 1373 to 1382, and 1389 to 1421; these read KDDDDDDDEEGN, NVKDEDDGGD, and PDDDQPPPSNDDGDDEEDEDDEEDGPSGADEPE.

As to quaternary structure, component of the SIN3S complex, which contains at least sin-3, hda-1, athp-1 and mrg-1. Interacts with ztf-11; the interaction is weak. Interacts with cfp-1. As to expression, expressed in all ray structural cells including ray 6, 7, 8 and 9 of the male tail. Also expressed in the inner labial neurons, socket cells, the cephalic neurons in the head and the ventral nerve cord.

The protein localises to the nucleus. Its function is as follows. Probable transcriptional repressor required for the deposition of dimethylated 'Lys-9' of histone H3 (H3K9me2) on asynapsed chromosome pairs (both autosomes and sex chromosomes) during meiosis, but this does not seem to solely affect the transcriptional status. Plays a role in ray fusion and patterning in the male tail, and this may be through activity of the histone deacetylase complex (HDAC). The protein is Paired amphipathic helix protein sin-3 of Caenorhabditis elegans.